Consider the following 234-residue polypeptide: N-acetyl-alpha-D-glucosaminyl L-malate deacetylase 1 (234 aa).

Residues H12, D15, and H113 each coordinate Zn(2+).

The protein belongs to the PIGL family. As to quaternary structure, homohexamer. Trimer of dimers. It depends on Zn(2+) as a cofactor.

The enzyme catalyses (S)-malyl N-acetyl-alpha-D-glucosaminide + H2O = (S)-malyl alpha-D-glucosaminide + acetate. Its function is as follows. Involved in bacillithiol (BSH) biosynthesis. Catalyzes the second step of the pathway, the deacetylation of N-acetylglucosaminylmalate (GlcNAc-Mal) to glucosamine malate (GlcN-Mal). The sequence is that of N-acetyl-alpha-D-glucosaminyl L-malate deacetylase 1 from Bacillus cereus (strain ATCC 14579 / DSM 31 / CCUG 7414 / JCM 2152 / NBRC 15305 / NCIMB 9373 / NCTC 2599 / NRRL B-3711).